Reading from the N-terminus, the 426-residue chain is Glucose-6-phosphate isomerase (426 aa).

E282 (proton donor) is an active-site residue. Catalysis depends on residues H303 and K419.

This sequence belongs to the GPI family.

The protein resides in the cytoplasm. The catalysed reaction is alpha-D-glucose 6-phosphate = beta-D-fructose 6-phosphate. Its pathway is carbohydrate biosynthesis; gluconeogenesis. It participates in carbohydrate degradation; glycolysis; D-glyceraldehyde 3-phosphate and glycerone phosphate from D-glucose: step 2/4. Its function is as follows. Catalyzes the reversible isomerization of glucose-6-phosphate to fructose-6-phosphate. The polypeptide is Glucose-6-phosphate isomerase (Mycoplasmoides gallisepticum (strain R(low / passage 15 / clone 2)) (Mycoplasma gallisepticum)).